Here is a 436-residue protein sequence, read N- to C-terminus: 3-ketoacyl-CoA thiolase (436 aa).

The active-site Acyl-thioester intermediate is Cys99. Active-site proton acceptor residues include His392 and Cys422.

The protein belongs to the thiolase-like superfamily. Thiolase family. As to quaternary structure, heterotetramer of two alpha chains (FadJ) and two beta chains (FadI).

The protein localises to the cytoplasm. It catalyses the reaction an acyl-CoA + acetyl-CoA = a 3-oxoacyl-CoA + CoA. The protein operates within lipid metabolism; fatty acid beta-oxidation. Its function is as follows. Catalyzes the final step of fatty acid oxidation in which acetyl-CoA is released and the CoA ester of a fatty acid two carbons shorter is formed. The protein is 3-ketoacyl-CoA thiolase of Escherichia coli (strain SMS-3-5 / SECEC).